Consider the following 259-residue polypeptide: Deoxyribose-phosphate aldolase (259 aa).

D102 (proton donor/acceptor) is an active-site residue. K167 acts as the Schiff-base intermediate with acetaldehyde in catalysis. The Proton donor/acceptor role is filled by K201.

The protein belongs to the DeoC/FbaB aldolase family. DeoC type 2 subfamily.

The protein resides in the cytoplasm. The catalysed reaction is 2-deoxy-D-ribose 5-phosphate = D-glyceraldehyde 3-phosphate + acetaldehyde. Its pathway is carbohydrate degradation; 2-deoxy-D-ribose 1-phosphate degradation; D-glyceraldehyde 3-phosphate and acetaldehyde from 2-deoxy-alpha-D-ribose 1-phosphate: step 2/2. In terms of biological role, catalyzes a reversible aldol reaction between acetaldehyde and D-glyceraldehyde 3-phosphate to generate 2-deoxy-D-ribose 5-phosphate. The chain is Deoxyribose-phosphate aldolase from Escherichia coli O1:K1 / APEC.